A 390-amino-acid polypeptide reads, in one-letter code: MATLNPRDVVIVDGVRSAMGKSKNGMFRNVRADSLSAELVRALIARNQFDVNEVEDLIWGCVNQTLEQGMNIGRNIGLLAGLPKTVAGQTVNRLCGSSMQAIHTAAAQIATNQGDIFIIGGVEHMGHVGMMHGIDLNPEASKHYAKASNMMGLTAEMLGRMNGITREEQDTFGVESHRRAWAATQEGRFKNEIIGVEGHDANGFKILCDIDEVIRPDANLEAFKALKPVFDPKGGSVTAATSSALSDGASAMLLMSAERAQALGLKPRAVIRSMAVAGCDAAIMGYGPVPATQKALKRAGLSIADIQTVELNEAFAAQGLSVLKGLGLYDKQDIVNLNGGAIALGHPLGCSGARITTTLLNVMEQQDTQIGLATMCIGLGQGIATVIERV.

Catalysis depends on Cys-95, which acts as the Acyl-thioester intermediate. Residues His-346 and Cys-376 each act as proton acceptor in the active site.

It belongs to the thiolase-like superfamily. Thiolase family. As to quaternary structure, heterotetramer of two alpha chains (FadB) and two beta chains (FadA).

Its subcellular location is the cytoplasm. It catalyses the reaction an acyl-CoA + acetyl-CoA = a 3-oxoacyl-CoA + CoA. Its pathway is lipid metabolism; fatty acid beta-oxidation. In terms of biological role, catalyzes the final step of fatty acid oxidation in which acetyl-CoA is released and the CoA ester of a fatty acid two carbons shorter is formed. The chain is 3-ketoacyl-CoA thiolase from Acinetobacter baumannii (strain ATCC 17978 / DSM 105126 / CIP 53.77 / LMG 1025 / NCDC KC755 / 5377).